The sequence spans 378 residues: Putative F-box protein At4g17565 (378 aa).

Residues 16–63 (PKWSELCPDLLRSIFEQLSFTNLNRAKLVCRSWNSASRGCVPKRNQIP) form the F-box domain.

The chain is Putative F-box protein At4g17565 from Arabidopsis thaliana (Mouse-ear cress).